The sequence spans 187 residues: UPF0398 protein MW1336 (187 aa).

The protein belongs to the UPF0398 family.

This Staphylococcus aureus (strain MW2) protein is UPF0398 protein MW1336.